Reading from the N-terminus, the 159-residue chain is SsrA-binding protein (159 aa).

Belongs to the SmpB family.

It localises to the cytoplasm. Its function is as follows. Required for rescue of stalled ribosomes mediated by trans-translation. Binds to transfer-messenger RNA (tmRNA), required for stable association of tmRNA with ribosomes. tmRNA and SmpB together mimic tRNA shape, replacing the anticodon stem-loop with SmpB. tmRNA is encoded by the ssrA gene; the 2 termini fold to resemble tRNA(Ala) and it encodes a 'tag peptide', a short internal open reading frame. During trans-translation Ala-aminoacylated tmRNA acts like a tRNA, entering the A-site of stalled ribosomes, displacing the stalled mRNA. The ribosome then switches to translate the ORF on the tmRNA; the nascent peptide is terminated with the 'tag peptide' encoded by the tmRNA and targeted for degradation. The ribosome is freed to recommence translation, which seems to be the essential function of trans-translation. The polypeptide is SsrA-binding protein (Bifidobacterium adolescentis (strain ATCC 15703 / DSM 20083 / NCTC 11814 / E194a)).